A 232-amino-acid polypeptide reads, in one-letter code: Ubiquinone biosynthesis O-methyltransferase (232 aa).

S-adenosyl-L-methionine contacts are provided by Arg36, Gly55, Asp76, and Met120.

It belongs to the methyltransferase superfamily. UbiG/COQ3 family.

The catalysed reaction is a 3-demethylubiquinol + S-adenosyl-L-methionine = a ubiquinol + S-adenosyl-L-homocysteine + H(+). The enzyme catalyses a 3-(all-trans-polyprenyl)benzene-1,2-diol + S-adenosyl-L-methionine = a 2-methoxy-6-(all-trans-polyprenyl)phenol + S-adenosyl-L-homocysteine + H(+). The protein operates within cofactor biosynthesis; ubiquinone biosynthesis. Its function is as follows. O-methyltransferase that catalyzes the 2 O-methylation steps in the ubiquinone biosynthetic pathway. In Burkholderia cenocepacia (strain ATCC BAA-245 / DSM 16553 / LMG 16656 / NCTC 13227 / J2315 / CF5610) (Burkholderia cepacia (strain J2315)), this protein is Ubiquinone biosynthesis O-methyltransferase.